The chain runs to 303 residues: Putative S-adenosyl-L-methionine-dependent methyltransferase MAP_4197c (303 aa).

S-adenosyl-L-methionine contacts are provided by residues D129 and 158–159 (DL).

The protein belongs to the UPF0677 family.

In terms of biological role, exhibits S-adenosyl-L-methionine-dependent methyltransferase activity. This is Putative S-adenosyl-L-methionine-dependent methyltransferase MAP_4197c from Mycolicibacterium paratuberculosis (strain ATCC BAA-968 / K-10) (Mycobacterium paratuberculosis).